Here is a 303-residue protein sequence, read N- to C-terminus: N-acetyl-D-glucosamine kinase (303 aa).

Residues 4-11 and 133-140 contribute to the ATP site; these read GFDIGGTK and GVGGGLIF. His-157, Cys-177, Cys-179, and Cys-184 together coordinate Zn(2+).

This sequence belongs to the ROK (NagC/XylR) family. NagK subfamily.

The enzyme catalyses N-acetyl-D-glucosamine + ATP = N-acetyl-D-glucosamine 6-phosphate + ADP + H(+). The protein operates within cell wall biogenesis; peptidoglycan recycling. Catalyzes the phosphorylation of N-acetyl-D-glucosamine (GlcNAc) derived from cell-wall degradation, yielding GlcNAc-6-P. The polypeptide is N-acetyl-D-glucosamine kinase (Shigella sonnei (strain Ss046)).